Here is a 442-residue protein sequence, read N- to C-terminus: Histidinol dehydrogenase (442 aa).

NAD(+) contacts are provided by tyrosine 136, glutamine 197, and asparagine 220. Residues serine 243, glutamine 265, and histidine 268 each contribute to the substrate site. Residues glutamine 265 and histidine 268 each coordinate Zn(2+). Residues glutamate 333 and histidine 334 each act as proton acceptor in the active site. Substrate-binding residues include histidine 334, aspartate 367, glutamate 421, and histidine 426. Zn(2+) is bound at residue aspartate 367. A Zn(2+)-binding site is contributed by histidine 426.

It belongs to the histidinol dehydrogenase family. Zn(2+) is required as a cofactor.

It carries out the reaction L-histidinol + 2 NAD(+) + H2O = L-histidine + 2 NADH + 3 H(+). It functions in the pathway amino-acid biosynthesis; L-histidine biosynthesis; L-histidine from 5-phospho-alpha-D-ribose 1-diphosphate: step 9/9. Catalyzes the sequential NAD-dependent oxidations of L-histidinol to L-histidinaldehyde and then to L-histidine. In Pseudomonas fluorescens (strain ATCC BAA-477 / NRRL B-23932 / Pf-5), this protein is Histidinol dehydrogenase.